Here is a 482-residue protein sequence, read N- to C-terminus: NAD(+) hydrolase ThsA (482 aa).

The 279-residue stretch at 3–281 (EHEQKIMIDR…EEITKRFRCK (279 aa)) folds into the Deacetylase sirtuin-type domain. NAD(+) is bound by residues D112 and H150. H150 serves as the catalytic Proton acceptor. The interval 282–482 (NVFLSGSAHE…SKIHDVIKLI (201 aa)) is SLOG (STALD) domain. 3'cADPR is bound by residues G287, S288, L324, F355, R373, K390, G407, and E411.

Belongs to the soluble Thoeris ThsA family. In terms of assembly, homotetramer in solution.

It catalyses the reaction NAD(+) + H2O = ADP-D-ribose + nicotinamide + H(+). Its activity is regulated as follows. In vivo probably activated by a cyclic ADP-D-ribose generated by ThsB (might be 3'cADPR). Functionally, NAD(+) hydrolyzing component (NADase) of the Thoeris antiviral defense system, composed of ThsA and ThsB (maybe J591_1492). As purified, has NADase activity that is not activated by any tested cADPR isomers; binds 3'cADPR better than 2'cADPR. It was suggested the purified protein is already in a fully active state. Upon activation binds and hydrolyzes NAD(+), leading to cell death and inhibition of phage replication. This chain is NAD(+) hydrolase ThsA, found in Acinetobacter baumannii (strain 532279).